A 59-amino-acid chain; its full sequence is Large ribosomal subunit protein bL32 (59 aa).

A disordered region spans residues 1–59; it reads MAVQQNKKSPSKRGMHRSHDALTAPALSVDSTTGEVHRPHHISPNGMYRGRKVVKAKGE. Positions 49–59 are enriched in basic residues; that stretch reads RGRKVVKAKGE.

Belongs to the bacterial ribosomal protein bL32 family.

This is Large ribosomal subunit protein bL32 (rpmF) from Neisseria meningitidis serogroup B (strain ATCC BAA-335 / MC58).